The sequence spans 344 residues: Anthranilate phosphoribosyltransferase 2 (344 aa).

5-phospho-alpha-D-ribose 1-diphosphate contacts are provided by residues glycine 81, 84-85 (GD), threonine 89, 91-94 (NIST), 109-117 (KHGNRALSS), and alanine 121. Glycine 81 provides a ligand contact to anthranilate. Residue serine 93 coordinates Mg(2+). Asparagine 112 lines the anthranilate pocket. Arginine 167 contributes to the anthranilate binding site. Mg(2+) contacts are provided by aspartate 226 and glutamate 227.

Belongs to the anthranilate phosphoribosyltransferase family. Homodimer. The cofactor is Mg(2+).

It carries out the reaction N-(5-phospho-beta-D-ribosyl)anthranilate + diphosphate = 5-phospho-alpha-D-ribose 1-diphosphate + anthranilate. It functions in the pathway amino-acid biosynthesis; L-tryptophan biosynthesis; L-tryptophan from chorismate: step 2/5. In terms of biological role, catalyzes the transfer of the phosphoribosyl group of 5-phosphorylribose-1-pyrophosphate (PRPP) to anthranilate to yield N-(5'-phosphoribosyl)-anthranilate (PRA). The polypeptide is Anthranilate phosphoribosyltransferase 2 (Ralstonia nicotianae (strain ATCC BAA-1114 / GMI1000) (Ralstonia solanacearum)).